Reading from the N-terminus, the 265-residue chain is GGVLKDTIQMIHGPLGCAYDTWHTKRYPTDNGHFNMKYVWSTDMKESHVVFGGEKRLEKSMHEAFDEMPDIKRMIVYTTCPTALIGDDIKAVAKKVMKDRPDVDVFTVECPGFSGVSQSKGHHVLNIGWINEKVETMEKEITSEYTMNFIGDFNIQGDTQLLQTYWDRLGIQVVAHFTGNGTYDDLRCMHQAQLNVVNCARSSGYIANELKKRYGIPRLDIDSWGFNYMAEGIRKICAFFGIEEKGEELIAEEYAKWKPKLDWYK.

Cys-17 and Cys-80 together coordinate [8Fe-7S] cluster. A [7Fe-V-9S-C-homocitryl] cluster-binding site is contributed by Cys-199.

The protein belongs to the NifD/NifK/NifE/NifN family. In terms of assembly, hexamer of two alpha, two beta, and two delta chains. It depends on [8Fe-7S] cluster as a cofactor. The cofactor is [7Fe-V-9S-C-homocitryl] cluster.

It carries out the reaction N2 + 8 reduced [2Fe-2S]-[ferredoxin] + 16 ATP + 16 H2O = H2 + 8 oxidized [2Fe-2S]-[ferredoxin] + 2 NH4(+) + 16 ADP + 16 phosphate + 6 H(+). Its function is as follows. This vanadium-iron protein is part of the nitrogenase complex that catalyzes the key enzymatic reactions in nitrogen fixation. This Azorhizophilus paspali (Azotobacter paspali) protein is Nitrogenase vanadium-iron protein alpha chain (vnfD).